Reading from the N-terminus, the 201-residue chain is uncharacterized protein (201 aa).

This is an uncharacterized protein from Bacillus subtilis (strain 168).